The chain runs to 146 residues: Hemoglobin subunit beta (146 aa).

The residue at position 1 (Val1) is an N-acetylvaline. The region spanning His2 to His146 is the Globin domain. Position 44 is a phosphoserine (Ser44). At Lys59 the chain carries N6-acetyllysine. Residue His63 coordinates heme b. N6-acetyllysine is present on Lys82. His92 contacts heme b. Cys93 is subject to S-nitrosocysteine. An N6-acetyllysine modification is found at Lys144.

Belongs to the globin family. Heterotetramer of two alpha chains and two beta chains. As to expression, red blood cells.

Involved in oxygen transport from the lung to the various peripheral tissues. In Otospermophilus beecheyi (California ground squirrel), this protein is Hemoglobin subunit beta.